A 200-amino-acid chain; its full sequence is Cytochrome c biogenesis ATP-binding export protein CcmA (200 aa).

The ABC transporter domain maps to 2 to 200 (LDVIELDFDY…NKADYEEYHL (199 aa)). 34-41 (GSNGAGKT) serves as a coordination point for ATP.

This sequence belongs to the ABC transporter superfamily. CcmA exporter (TC 3.A.1.107) family. The complex is composed of two ATP-binding proteins (CcmA) and two transmembrane proteins (CcmB).

The protein localises to the cell inner membrane. The enzyme catalyses heme b(in) + ATP + H2O = heme b(out) + ADP + phosphate + H(+). In terms of biological role, part of the ABC transporter complex CcmAB involved in the biogenesis of c-type cytochromes; once thought to export heme, this seems not to be the case, but its exact role is uncertain. Responsible for energy coupling to the transport system. The chain is Cytochrome c biogenesis ATP-binding export protein CcmA from Legionella pneumophila (strain Paris).